Here is a 194-residue protein sequence, read N- to C-terminus: Peptidyl-tRNA hydrolase (194 aa).

Tyr-17 contributes to the tRNA binding site. His-22 acts as the Proton acceptor in catalysis. TRNA contacts are provided by Tyr-68, Asn-70, and Asn-116.

It belongs to the PTH family. In terms of assembly, monomer.

Its subcellular location is the cytoplasm. It catalyses the reaction an N-acyl-L-alpha-aminoacyl-tRNA + H2O = an N-acyl-L-amino acid + a tRNA + H(+). Its function is as follows. Hydrolyzes ribosome-free peptidyl-tRNAs (with 1 or more amino acids incorporated), which drop off the ribosome during protein synthesis, or as a result of ribosome stalling. Functionally, catalyzes the release of premature peptidyl moieties from peptidyl-tRNA molecules trapped in stalled 50S ribosomal subunits, and thus maintains levels of free tRNAs and 50S ribosomes. The chain is Peptidyl-tRNA hydrolase from Pseudomonas fluorescens (strain ATCC BAA-477 / NRRL B-23932 / Pf-5).